The primary structure comprises 261 residues: DNA repair protein RecO (261 aa).

This sequence belongs to the RecO family.

Functionally, involved in DNA repair and RecF pathway recombination. The sequence is that of DNA repair protein RecO from Mycobacteroides abscessus (strain ATCC 19977 / DSM 44196 / CCUG 20993 / CIP 104536 / JCM 13569 / NCTC 13031 / TMC 1543 / L948) (Mycobacterium abscessus).